Reading from the N-terminus, the 287-residue chain is 4-hydroxybenzoate octaprenyltransferase (287 aa).

Transmembrane regions (helical) follow at residues 22-42, 45-65, 95-115, 116-136, 140-160, 162-182, 214-234, 237-257, and 264-284; these read IGTYLLLWPTYWALWIASDGW, LQLLLVFSLGVFIMRSAGCVI, AINLFGVLIGMAFGLVLMLSW, STIYLSVVAVLLAAIYPFMKR, LPQLFLGAAFSWGMIMAFSEA, GEIPLVAWLLFTANLCWTIAY, IGFLQLMTLALLWTVGDILAF, PYQLCIIAAAGLFSYQQLLIV, and CFQAFLHNHWVGLVVFVGIAI.

It belongs to the UbiA prenyltransferase family. Mg(2+) serves as cofactor.

It localises to the cell inner membrane. It carries out the reaction all-trans-octaprenyl diphosphate + 4-hydroxybenzoate = 4-hydroxy-3-(all-trans-octaprenyl)benzoate + diphosphate. The protein operates within cofactor biosynthesis; ubiquinone biosynthesis. Functionally, catalyzes the prenylation of para-hydroxybenzoate (PHB) with an all-trans polyprenyl group. Mediates the second step in the final reaction sequence of ubiquinone-8 (UQ-8) biosynthesis, which is the condensation of the polyisoprenoid side chain with PHB, generating the first membrane-bound Q intermediate 3-octaprenyl-4-hydroxybenzoate. The chain is 4-hydroxybenzoate octaprenyltransferase from Colwellia psychrerythraea (strain 34H / ATCC BAA-681) (Vibrio psychroerythus).